Consider the following 1067-residue polypeptide: Glycine--tRNA ligase, chloroplastic/mitochondrial 2 (1067 aa).

A chloroplast and mitochondrion-targeting transit peptide spans 1–50 (MAILHFSLPLIVSFLRPHASPRFFLLPRSLSQSPFLSRRRFHRTSAVSSA). Substrate is bound at residue E513. Residues 589-596 (RNSGINIE), 619-624 (LVVPQN), 744-745 (RL), and 859-862 (GLRR) contribute to the ATP site. 624–628 (NLLNE) lines the substrate pocket. Position 855–859 (855–859 (NDPFG)) interacts with substrate.

This sequence belongs to the class-II aminoacyl-tRNA synthetase family. Homodimer.

The protein resides in the plastid. It localises to the chloroplast. The protein localises to the mitochondrion. The catalysed reaction is tRNA(Gly) + glycine + ATP = glycyl-tRNA(Gly) + AMP + diphosphate. Catalyzes the attachment of glycine to tRNA(Gly). Is also able produce diadenosine tetraphosphate (Ap4A), a universal pleiotropic signaling molecule needed for cell regulation pathways, by direct condensation of 2 ATPs. This is Glycine--tRNA ligase, chloroplastic/mitochondrial 2 from Arabidopsis thaliana (Mouse-ear cress).